A 63-amino-acid chain; its full sequence is Putative F-box protein At1g47702 (63 aa).

In terms of domain architecture, F-box spans 23–63 (KDRISDLPNRILGKIIVKLPLDEAVRIMALSKRWKSIWDDN).

The sequence is that of Putative F-box protein At1g47702 from Arabidopsis thaliana (Mouse-ear cress).